We begin with the raw amino-acid sequence, 210 residues long: uncharacterized protein (210 aa).

A phosphoserine mark is found at S18, S39, S41, S57, and S60. Residues 33–46 show a composition bias toward polar residues; the sequence is LDLDQRSMSPSNIA. The tract at residues 33–58 is disordered; the sequence is LDLDQRSMSPSNIASGEDRITRTNSG. Disordered regions lie at residues 100-139 and 177-210; these read YDHNNGTKSPTPKTSNMVDPKNKKKNKKKKNDKDDKYKVS and DSAPLDNANYPLSDHSPSLNSMDNTTKHSSNVHT. Positions 102–116 are enriched in polar residues; that stretch reads HNNGTKSPTPKTSNM. Positions 130 to 139 are enriched in basic and acidic residues; the sequence is NDKDDKYKVS. Residues S178, S189, and S192 each carry the phosphoserine modification. The segment covering 191–210 has biased composition (polar residues); it reads HSPSLNSMDNTTKHSSNVHT.

This is an uncharacterized protein from Saccharomyces cerevisiae (strain ATCC 204508 / S288c) (Baker's yeast).